The primary structure comprises 403 residues: Phosphoglycerate kinase (403 aa).

Substrate is bound by residues 21–23 (DFN), Arg-36, 59–62 (HLGR), Arg-119, and Arg-159. ATP is bound by residues Lys-214, Gly-301, Glu-332, and 359–362 (GGDS).

It belongs to the phosphoglycerate kinase family. As to quaternary structure, monomer.

The protein localises to the cytoplasm. The catalysed reaction is (2R)-3-phosphoglycerate + ATP = (2R)-3-phospho-glyceroyl phosphate + ADP. It participates in carbohydrate degradation; glycolysis; pyruvate from D-glyceraldehyde 3-phosphate: step 2/5. This chain is Phosphoglycerate kinase, found in Lactobacillus gasseri (strain ATCC 33323 / DSM 20243 / BCRC 14619 / CIP 102991 / JCM 1131 / KCTC 3163 / NCIMB 11718 / NCTC 13722 / AM63).